The primary structure comprises 312 residues: D-alanine--D-alanine ligase (312 aa).

Residues 99-304 enclose the ATP-grasp domain; that stretch reads KKILKAEGIP…FEDLVEKILM (206 aa). ATP is bound at residue 131–186; it reads LQTLKLPVVIKAPREGSTIGIEFVFSKQELPKAIKKVLEIDKQLLVEEFIEGVEVT. 3 residues coordinate Mg(2+): Asp-257, Glu-271, and Asn-273.

Belongs to the D-alanine--D-alanine ligase family. Mg(2+) serves as cofactor. It depends on Mn(2+) as a cofactor.

The protein resides in the cytoplasm. The catalysed reaction is 2 D-alanine + ATP = D-alanyl-D-alanine + ADP + phosphate + H(+). It functions in the pathway cell wall biogenesis; peptidoglycan biosynthesis. In terms of biological role, cell wall formation. The polypeptide is D-alanine--D-alanine ligase (Carboxydothermus hydrogenoformans (strain ATCC BAA-161 / DSM 6008 / Z-2901)).